Consider the following 715-residue polypeptide: Ribosomal RNA large subunit methyltransferase K/L (715 aa).

The region spanning 47–158 (LGYKISLWTR…RDNVTIFLDF (112 aa)) is the THUMP domain.

This sequence belongs to the methyltransferase superfamily. RlmKL family.

The protein localises to the cytoplasm. It carries out the reaction guanosine(2445) in 23S rRNA + S-adenosyl-L-methionine = N(2)-methylguanosine(2445) in 23S rRNA + S-adenosyl-L-homocysteine + H(+). The catalysed reaction is guanosine(2069) in 23S rRNA + S-adenosyl-L-methionine = N(2)-methylguanosine(2069) in 23S rRNA + S-adenosyl-L-homocysteine + H(+). Functionally, specifically methylates the guanine in position 2445 (m2G2445) and the guanine in position 2069 (m7G2069) of 23S rRNA. This chain is Ribosomal RNA large subunit methyltransferase K/L, found in Colwellia psychrerythraea (strain 34H / ATCC BAA-681) (Vibrio psychroerythus).